A 111-amino-acid polypeptide reads, in one-letter code: Kalata-B7 (111 aa).

The signal sequence occupies residues 1-28; sequence MAKFTNCLALCLLLAAVVGAFGVELSEA. A propeptide spanning residues 29–75 is cleaved from the precursor; that stretch reads DKSAVVNEIAEKMALQEMLDGVDKLFLRKMKSSETTLTMFLKEMQLK. Residues 76–104 constitute a cross-link (cyclopeptide (Gly-Asn)); that stretch reads GLPVCGETCTLGTCYTQGCTCSWPICKRN. 3 disulfide bridges follow: Cys-80–Cys-94, Cys-84–Cys-96, and Cys-89–Cys-101. Residues 105-111 constitute a propeptide that is removed on maturation; the sequence is GLPDVAA.

Kalata-B7 is a cyclic peptide.

In terms of biological role, probably participates in a plant defense mechanism. Has hemolytic activity. This chain is Kalata-B7 (OAK3), found in Oldenlandia affinis.